A 224-amino-acid chain; its full sequence is RNA-binding protein 24-B (224 aa).

The 78-residue stretch at 11-88 (TKIFVGGLPY…RKANVNLAYL (78 aa)) folds into the RRM domain.

The protein localises to the nucleus. It localises to the cytoplasm. In terms of biological role, multifunctional RNA-binding protein involved in the regulation of pre-mRNA splicing, mRNA stability and mRNA translation important for cell fate decision and differentiation. Plays a major role in pre-mRNA alternative splicing regulation. Mediates preferentially muscle-specific exon inclusion in numerous mRNAs important for striated cardiac and skeletal muscle cell differentiation. Binds to intronic splicing enhancer (ISE) composed of stretches of GU-rich motifs localized in flanking intron of exon that will be included by alternative splicing. Involved in embryonic stem cell (ESC) transition to cardiac cell differentiation by promoting pre-mRNA alternative splicing events of several pluripotency and/or differentiation genes. Plays a role in the regulation of mRNA stability and mRNA translation to which it is bound. Involved in myogenic differentiation by regulating myog levels. Binds to a huge amount of mRNAs. Required for embryonic heart development, sarcomer and M-band formation in striated muscles. The sequence is that of RNA-binding protein 24-B (rbm24-b) from Xenopus laevis (African clawed frog).